Consider the following 293-residue polypeptide: Extracellular metalloprotease PODANS_2_14170 (293 aa).

A signal peptide spans 1 to 18 (MRFSLALAAAGLAQTAFA). Asn60 carries an N-linked (GlcNAc...) asparagine glycan. Zn(2+) is bound at residue His206. Glu207 is a catalytic residue. Zn(2+) is bound at residue His210. Cysteines 242 and 269 form a disulfide.

The protein belongs to the peptidase M43B family.

It is found in the secreted. In terms of biological role, secreted metalloproteinase that allows assimilation of proteinaceous substrates. This Podospora anserina (strain S / ATCC MYA-4624 / DSM 980 / FGSC 10383) (Pleurage anserina) protein is Extracellular metalloprotease PODANS_2_14170.